A 455-amino-acid polypeptide reads, in one-letter code: Bifunctional protein GlmU (455 aa).

The interval 1–226 (MSLEIVILAA…AMEVQGANDR (226 aa)) is pyrophosphorylase. UDP-N-acetyl-alpha-D-glucosamine-binding positions include 8–11 (LAAG), Lys-22, Gln-73, 78–79 (GT), 99–101 (YGD), Gly-136, Glu-151, Asn-166, and Asn-224. Asp-101 contributes to the Mg(2+) binding site. Asn-224 provides a ligand contact to Mg(2+). Residues 227–247 (KQLAELERHYQLRAGRRLMAQ) form a linker region. The tract at residues 248-455 (GVTLRDPARF…WKRPEKIKKD (208 aa)) is N-acetyltransferase. UDP-N-acetyl-alpha-D-glucosamine-binding residues include Arg-330 and Lys-348. Residue His-360 is the Proton acceptor of the active site. Positions 363 and 374 each coordinate UDP-N-acetyl-alpha-D-glucosamine. Acetyl-CoA contacts are provided by residues Ala-377, 383 to 384 (NY), Ser-402, Ala-420, and Arg-437.

The protein in the N-terminal section; belongs to the N-acetylglucosamine-1-phosphate uridyltransferase family. In the C-terminal section; belongs to the transferase hexapeptide repeat family. Homotrimer. The cofactor is Mg(2+).

The protein localises to the cytoplasm. It catalyses the reaction alpha-D-glucosamine 1-phosphate + acetyl-CoA = N-acetyl-alpha-D-glucosamine 1-phosphate + CoA + H(+). The enzyme catalyses N-acetyl-alpha-D-glucosamine 1-phosphate + UTP + H(+) = UDP-N-acetyl-alpha-D-glucosamine + diphosphate. It functions in the pathway nucleotide-sugar biosynthesis; UDP-N-acetyl-alpha-D-glucosamine biosynthesis; N-acetyl-alpha-D-glucosamine 1-phosphate from alpha-D-glucosamine 6-phosphate (route II): step 2/2. Its pathway is nucleotide-sugar biosynthesis; UDP-N-acetyl-alpha-D-glucosamine biosynthesis; UDP-N-acetyl-alpha-D-glucosamine from N-acetyl-alpha-D-glucosamine 1-phosphate: step 1/1. It participates in bacterial outer membrane biogenesis; LPS lipid A biosynthesis. Its function is as follows. Catalyzes the last two sequential reactions in the de novo biosynthetic pathway for UDP-N-acetylglucosamine (UDP-GlcNAc). The C-terminal domain catalyzes the transfer of acetyl group from acetyl coenzyme A to glucosamine-1-phosphate (GlcN-1-P) to produce N-acetylglucosamine-1-phosphate (GlcNAc-1-P), which is converted into UDP-GlcNAc by the transfer of uridine 5-monophosphate (from uridine 5-triphosphate), a reaction catalyzed by the N-terminal domain. The chain is Bifunctional protein GlmU from Pseudomonas fluorescens (strain ATCC BAA-477 / NRRL B-23932 / Pf-5).